The chain runs to 390 residues: Na(+)/H(+) antiporter NhaA 1 (390 aa).

11 helical membrane-spanning segments follow: residues 14–34, 59–79, 94–114, 125–145, 154–174, 179–199, 205–225, 260–280, 295–315, 328–348, and 362–382; these read SGIL…NGVL, TILW…GLEL, VALP…IFYV, GWAI…FLLG, LFLL…IAIF, LSII…ILNY, IYIY…SGIH, PIVA…VVFS, IIFG…FLAI, WLHL…SLFI, and ANKI…YFVL.

Belongs to the NhaA Na(+)/H(+) (TC 2.A.33) antiporter family.

The protein localises to the cell inner membrane. The catalysed reaction is Na(+)(in) + 2 H(+)(out) = Na(+)(out) + 2 H(+)(in). Functionally, na(+)/H(+) antiporter that extrudes sodium in exchange for external protons. This chain is Na(+)/H(+) antiporter NhaA 1, found in Campylobacter fetus subsp. fetus (strain 82-40).